The chain runs to 1463 residues: Collagen alpha-1(III) chain (1463 aa).

The signal sequence occupies residues 1 to 23; it reads MMSFVQCGTWFLLTLLHPSLILA. Residues 24 to 154 constitute a propeptide, N-terminal propeptide; that stretch reads QQSNVDELGC…CPTGGQNYSP (131 aa). Residues 31–90 form the VWFC domain; that stretch reads LGCNYLGQSYESRDVWKPEPCQICVCDSGSVLCDDIMCDDEPLDCPNPEIPFGECCAICP. The interval 97–1195 is disordered; that stretch reads PVIPDGNRPQ…PGPPGAPGPC (1099 aa). The span at 147-156 shows a compositional bias: polar residues; sequence TGGQNYSPQF. The nonhelical region (N-terminal) stretch occupies residues 155-169; it reads QFDSYDVKSGVGGMG. Positions 164-173 are enriched in gly residues; sequence GVGGMGGYPG. The tract at residues 170-1195 is triple-helical region; it reads GYPGPAGPPG…PGPPGAPGPC (1026 aa). A compositionally biased stretch (pro residues) spans 174–184; sequence PAGPPGPPGPP. The segment covering 186–198 has biased composition (low complexity); sequence SSGHPGSPGSPGY. Over residues 228 to 240 the composition is skewed to basic and acidic residues; the sequence is KDGESGRPGRPGE. The span at 250-259 shows a compositional bias: low complexity; the sequence is KGPAGIPGFP. Residue lysine 262 is modified to 5-hydroxylysine; alternate. Lysine 262 is a glycosylation site (O-linked (Gal...) hydroxylysine; alternate). A compositionally biased stretch (basic and acidic residues) spans 265 to 276; that stretch reads RGFDGRNGEKGE. Lysine 283 is modified (5-hydroxylysine). 2 stretches are compositionally biased toward low complexity: residues 310-321 and 354-379; these read PGLPGAAGARGN and PAGS…AGAQ. The span at 389–398 shows a compositional bias: gly residues; it reads GSPGGKGEMG. Low complexity-rich tracts occupy residues 399–429 and 481–502; these read PAGI…QRGP and PGER…PGEK. Over residues 527–548 the composition is skewed to gly residues; it reads GTPGGPGIRGMPGSPGGPGNDG. Low complexity-rich tracts occupy residues 606 to 615 and 637 to 652; these read PAGKNGETGP and QGLQ…PGEN. Residues 668-677 show a composition bias toward gly residues; it reads GVPGGKGDSG. Residues 678–691 show a composition bias toward low complexity; that stretch reads APGERGPPGTAGTP. Positions 692-708 are enriched in gly residues; the sequence is GLRGGAGPPGPEGGKGP. A compositionally biased stretch (pro residues) spans 709–718; it reads AGPPGPPGTS. Positions 822-834 are enriched in basic and acidic residues; that stretch reads AKGERGAPGEKGE. The span at 835–849 shows a compositional bias: gly residues; sequence GGPPGAAGPPGGSGP. Lysine 859 carries the post-translational modification 5-hydroxylysine. The segment covering 863–879 has biased composition (gly residues); sequence GSPGGPGAAGFPGGRGL. A compositionally biased stretch (pro residues) spans 889–906; that stretch reads PGPPGPSGAPGKDGPPGP. 2 stretches are compositionally biased toward low complexity: residues 907-934 and 945-960; these read AGNS…KGPP and PLGI…LAGP. Lysine 976 is modified (5-hydroxylysine). Pro residues predominate over residues 1045–1054; it reads PGHPGPPGPV. The segment covering 1068–1084 has biased composition (low complexity); it reads PAGPSGAPGPAGARGAP. 2 positions are modified to 5-hydroxylysine: lysine 1093 and lysine 1105. Low complexity predominate over residues 1120 to 1132; that stretch reads PGAAGHQGAVGSP. The span at 1180–1192 shows a compositional bias: pro residues; that stretch reads PGQPGPPGPPGAP. Residues 1219–1463 constitute a propeptide, C-terminal propeptide; it reads DDPMDFKINT…GVDIGPVCFL (245 aa). The 235-residue stretch at 1229–1463 folds into the Fibrillar collagen NC1 domain; sequence EEIMSSLKSV…GVDIGPVCFL (235 aa). Disulfide bonds link cysteine 1259-cysteine 1291, cysteine 1299-cysteine 1461, and cysteine 1369-cysteine 1414. Residues aspartate 1277, asparagine 1279, glutamine 1280, cysteine 1282, and aspartate 1285 each coordinate Ca(2+).

The protein belongs to the fibrillar collagen family. As to quaternary structure, trimers of identical alpha 1(III) chains. The chains are linked to each other by interchain disulfide bonds. Trimers are also cross-linked via hydroxylysines. Interacts with ADGRG1. In terms of processing, O-glycosylated. Prolines at the third position of the tripeptide repeating unit (G-X-Y) are hydroxylated in some or all of the chains.

It localises to the secreted. The protein resides in the extracellular space. Its subcellular location is the extracellular matrix. Its function is as follows. Collagen type III occurs in most soft connective tissues along with type I collagen. Involved in regulation of cortical development. Is the major ligand of ADGRG1 in the developing brain and binding to ADGRG1 inhibits neuronal migration and activates the RhoA pathway by coupling ADGRG1 to GNA13 and possibly GNA12. The protein is Collagen alpha-1(III) chain (Col3a1) of Rattus norvegicus (Rat).